A 309-amino-acid chain; its full sequence is Taste receptor type 2 member 31 (309 aa).

Topologically, residues 1 to 2 are extracellular; the sequence is MT. Residues 3-23 traverse the membrane as a helical segment; it reads TFIPIIFSSLVVVIFVIGNFA. Residues 24–55 are Cytoplasmic-facing; that stretch reads NGFIALVNSIEWFKRQKISFADQILTALAVSR. The helical transmembrane segment at 56–76 threads the bilayer; it reads VGLLWVLLLNWYSTVLNPAFY. Over 77 to 100 the chain is Extracellular; sequence SVEVRTTAYNVWAVTGHFSNWLAT. Residues 101 to 121 traverse the membrane as a helical segment; that stretch reads SLSIFYLLKIANFSNLIFLHL. Over 122-126 the chain is Cytoplasmic; it reads KRRVK. A helical transmembrane segment spans residues 127-147; it reads SVILVMLLGPLLFLACQLFMI. Topologically, residues 148–181 are extracellular; it reads NMKEIVRTKEYEGNMTWKIKLRSAVYLSDATVTT. Asparagine 161 carries an N-linked (GlcNAc...) asparagine glycan. Residues 182-202 form a helical membrane-spanning segment; that stretch reads LGNLVPFTLTLLCFLLLICSL. Residues 203-229 lie on the Cytoplasmic side of the membrane; it reads CKHLKKMQLHGKGSQDPSTKVHIKVLQ. A helical membrane pass occupies residues 230–250; that stretch reads TVISFLLLCAIYFLSIMISVW. Residues 251 to 259 are Extracellular-facing; the sequence is SFGSLKNKP. A helical transmembrane segment spans residues 260 to 280; sequence VFMFCKAMRFSYPSIHPFILI. The Cytoplasmic portion of the chain corresponds to 281-309; the sequence is WGNKKLKQTFLSVLRQVRYWVKGEKPSSP.

This sequence belongs to the G-protein coupled receptor T2R family.

Its subcellular location is the membrane. Its function is as follows. Receptor that may play a role in the perception of bitterness and is gustducin-linked. May play a role in sensing the chemical composition of the gastrointestinal content. The activity of this receptor may stimulate alpha gustducin, mediate PLC-beta-2 activation and lead to the gating of TRPM5. This Pan troglodytes (Chimpanzee) protein is Taste receptor type 2 member 31 (TAS2R31).